The following is a 427-amino-acid chain: Enolase (427 aa).

Residue glutamine 163 participates in (2R)-2-phosphoglycerate binding. Glutamate 205 functions as the Proton donor in the catalytic mechanism. Residues aspartate 242, glutamate 285, and aspartate 312 each contribute to the Mg(2+) site. Lysine 337, arginine 366, serine 367, and lysine 388 together coordinate (2R)-2-phosphoglycerate. Lysine 337 functions as the Proton acceptor in the catalytic mechanism.

The protein belongs to the enolase family. Mg(2+) serves as cofactor.

The protein localises to the cytoplasm. It localises to the secreted. The protein resides in the cell surface. It catalyses the reaction (2R)-2-phosphoglycerate = phosphoenolpyruvate + H2O. It functions in the pathway carbohydrate degradation; glycolysis; pyruvate from D-glyceraldehyde 3-phosphate: step 4/5. Its function is as follows. Catalyzes the reversible conversion of 2-phosphoglycerate (2-PG) into phosphoenolpyruvate (PEP). It is essential for the degradation of carbohydrates via glycolysis. In Xanthobacter autotrophicus (strain ATCC BAA-1158 / Py2), this protein is Enolase.